Reading from the N-terminus, the 159-residue chain is Ribosomal RNA large subunit methyltransferase H (159 aa).

S-adenosyl-L-methionine-binding positions include leucine 76, glycine 108, and phenylalanine 127–phenylalanine 132.

The protein belongs to the RNA methyltransferase RlmH family. In terms of assembly, homodimer.

It is found in the cytoplasm. The catalysed reaction is pseudouridine(1915) in 23S rRNA + S-adenosyl-L-methionine = N(3)-methylpseudouridine(1915) in 23S rRNA + S-adenosyl-L-homocysteine + H(+). Functionally, specifically methylates the pseudouridine at position 1915 (m3Psi1915) in 23S rRNA. This chain is Ribosomal RNA large subunit methyltransferase H, found in Alkaliphilus metalliredigens (strain QYMF).